A 599-amino-acid chain; its full sequence is Adenine deaminase (599 aa).

A disordered region spans residues 1-31; that stretch reads MARSNRRGGRGDPEDDPAWAPPGHRCAGERA.

This sequence belongs to the metallo-dependent hydrolases superfamily. Adenine deaminase family. Mn(2+) is required as a cofactor.

It carries out the reaction adenine + H2O + H(+) = hypoxanthine + NH4(+). In Methanopyrus kandleri (strain AV19 / DSM 6324 / JCM 9639 / NBRC 100938), this protein is Adenine deaminase.